Reading from the N-terminus, the 420-residue chain is uncharacterized protein (420 aa).

The first 25 residues, M1–G25, serve as a signal peptide directing secretion. C26 carries the N-acetylcysteine modification. C26 is lipidated: S-archaeol cysteine.

This sequence belongs to the bacterial solute-binding protein 1 family.

It is found in the cell membrane. Probably part of a binding-protein-dependent transport system PH1036/38/39. This is an uncharacterized protein from Pyrococcus horikoshii (strain ATCC 700860 / DSM 12428 / JCM 9974 / NBRC 100139 / OT-3).